The sequence spans 511 residues: Vesicular acetylcholine transporter (511 aa).

At 1–36 (MVVGQAKAAMGKISSAIGERSKRISGAMNEPLRKRK) the chain is on the cytoplasmic side. The helical transmembrane segment at 37-57 (ILLVIVCIAMLLDNMLYMVIV) threads the bilayer. Topologically, residues 58-108 (PIVPNYLETIRTYKLVYITIPSNGTNGSLLNSTQRAVLERNPNANEDIQIG) are lumenal, vesicle. Asparagine 80, asparagine 83, and asparagine 88 each carry an N-linked (GlcNAc...) asparagine glycan. The chain crosses the membrane as a helical span at residues 109–129 (VLFASKAILQLLSNPFTGTFI). The Cytoplasmic segment spans residues 130–135 (DRVGYD). The helical transmembrane segment at 136–156 (IPLLIGLTIMFFSTITFAFGE) threads the bilayer. At 157–165 (SYAILFAAR) the chain is on the lumenal, vesicle side. A helical membrane pass occupies residues 166-186 (SLQGLGSAFADTSGIAMIADK). The Cytoplasmic portion of the chain corresponds to 187-197 (YTEESERTQAL). Residues 198–218 (GIALAFISFGSLVAPPFGGVL) traverse the membrane as a helical segment. Topologically, residues 219 to 225 (YQFAGKW) are lumenal, vesicle. The helical transmembrane segment at 226–246 (VPFLVLSFVCLLDGILLLMVV) threads the bilayer. Residues 247–267 (TPFASRTRGNTLQGTPIHKLM) are Cytoplasmic-facing. Residues 268-288 (IDPYIAVVAGALTTCNIPLAF) traverse the membrane as a helical segment. Residues 289–306 (LEPTISNWMKKTMNASEW) are Lumenal, vesicle-facing. A glycan (N-linked (GlcNAc...) asparagine) is linked at asparagine 302. Residues 307 to 327 (QMGITWLPAFFPHILGVYITV) traverse the membrane as a helical segment. Residues 328 to 337 (KLAAKYPNYQ) lie on the Cytoplasmic side of the membrane. A helical transmembrane segment spans residues 338 to 358 (WLYGAFGLVIIGVSSCTIPAC). Topologically, residues 359–363 (RNFEE) are lumenal, vesicle. A helical transmembrane segment spans residues 364–384 (LIIPLCALCFGIALVDTALLP). The Cytoplasmic portion of the chain corresponds to 385-400 (TLAFLVDIRYVSVYGS). The chain crosses the membrane as a helical span at residues 401–421 (VYAIADISYSVAYALGPIMAG). The Lumenal, vesicle segment spans residues 422 to 428 (QIVHDLG). The helical transmembrane segment at 429 to 449 (FVQLNLGMGLVNILYAPALLF) threads the bilayer. Residues 450-511 (LRNVCQMKPS…VLSDQEGYSE (62 aa)) are Cytoplasmic-facing. Residues 486 to 511 (AKEPHGTSSGNHSVHAVLSDQEGYSE) form a disordered region.

Belongs to the major facilitator superfamily. Vesicular transporter family. In terms of tissue distribution, high expression in the electric lobe of the brain.

The protein localises to the membrane. Its function is as follows. Involved in acetylcholine transport into synaptic vesicles. The protein is Vesicular acetylcholine transporter of Torpedo torpedo (Common torpedo).